Consider the following 892-residue polypeptide: Major core protein OPG136 precursor (892 aa).

Positions 616–698 (SPEGEETIIC…ILDRIITNAG (83 aa)) are excised as a propeptide.

Belongs to the orthopxvirus protein OPG136 family. Interacts with P39/A4. The precursor is cleaved by OPG083 to give rise to the 62 kDa mature protein during virion maturation. Proteolytic cleavage of major core proteins OPG136, OPG129, and OPG098, which occurs at a late stage of core formation, is required for production of infectious mature virions (MV).

It localises to the virion. In terms of biological role, core protein 4a is the most abundant virion protein. Major component of the virion core that undergoes proteolytic processing during the immature virion (IV) to mature virion (MV) transition. This chain is Major core protein OPG136 precursor (OPG136), found in Homo sapiens (Human).